Consider the following 210-residue polypeptide: Protein HEADING DATE REPRESSOR 1 (210 aa).

The interval 1-97 (MEEPASADPP…GKRSSAEMLL (97 aa)) is disordered. The stretch at 29–49 (QQELNKEAADEQLNNQAHEEA) forms a coiled coil. Composition is skewed to basic and acidic residues over residues 45–54 (AHEEAMKIDD) and 62–79 (DDVH…RKAL). Residues 129–184 (RRIAIQEMNRKDREINGLNEQLEEDSRVLELLQKQLADERKKRTEIEKENSMLHEQ) are a coiled coil.

In terms of assembly, interacts with OSK3 and OSK4. Mostly expressed in leaves, seedlings and floral organs, and, to a lower extent, in panicle, roots, nodes, internodes, leaf joint and sheath.

The protein resides in the nucleus. Its function is as follows. Regulates flowering time via a photoperiod-dependent pathway. Suppressor of flowering that upregulates HD1 and down-regulates EHD1 in long days (LD), thus leading to the down-regulation of HD3A and RFT1. Triggers OSK4-mediated HD1 phosphorylation. The sequence is that of Protein HEADING DATE REPRESSOR 1 from Oryza sativa subsp. japonica (Rice).